The following is a 608-amino-acid chain: Dolichyl-diphosphooligosaccharide--protein glycosyltransferase subunit 1 (608 aa).

The signal sequence occupies residues 1–25; it reads MESPVALLLLLLLCLGALAPTPGSA. Residues 26–440 are Lumenal-facing; that stretch reads SSEAPPLVNE…FNKVLMLQEP (415 aa). An N6-acetyllysine modification is found at K188. An N-linked (GlcNAc...) asparagine glycan is attached at N300. A helical membrane pass occupies residues 441 to 458; the sequence is LLVVAAFYILFFTVIIYV. Over 459–608 the chain is Cytoplasmic; the sequence is RLDFSITKDP…TKIDHILDAL (150 aa). K539 is modified (N6-acetyllysine; alternate). K539 participates in a covalent cross-link: Glycyl lysine isopeptide (Lys-Gly) (interchain with G-Cter in SUMO2); alternate.

This sequence belongs to the OST1 family. Component of the oligosaccharyltransferase (OST) complex. OST exists in two different complex forms which contain common core subunits RPN1, RPN2, OST48, OST4, DAD1 and TMEM258, either STT3A or STT3B as catalytic subunits, and form-specific accessory subunits. STT3A complex assembly occurs through the formation of 3 subcomplexes. Subcomplex 1 contains RPN1 and TMEM258, subcomplex 2 contains the STT3A-specific subunits STT3A, DC2/OSTC, and KCP2 as well as the core subunit OST4, and subcomplex 3 contains RPN2, DAD1, and OST48. The STT3A complex can form stable complexes with the Sec61 complex or with both the Sec61 and TRAP complexes. Interacts with TMEM35A/NACHO. Ubiquitinated by the ECS(ASB11) complex. Ubiquitinated by RNF128, leading to degradation in a proteasome/lysosome-dependent manner. In terms of processing, ufmylated by UFL1 in response to endoplasmic reticulum stress, promoting reticulophagy of endoplasmic reticulum sheets.

Its subcellular location is the endoplasmic reticulum membrane. The protein operates within protein modification; protein glycosylation. In terms of biological role, subunit of the oligosaccharyl transferase (OST) complex that catalyzes the initial transfer of a defined glycan (Glc(3)Man(9)GlcNAc(2) in eukaryotes) from the lipid carrier dolichol-pyrophosphate to an asparagine residue within an Asn-X-Ser/Thr consensus motif in nascent polypeptide chains, the first step in protein N-glycosylation. N-glycosylation occurs cotranslationally and the complex associates with the Sec61 complex at the channel-forming translocon complex that mediates protein translocation across the endoplasmic reticulum (ER). All subunits are required for a maximal enzyme activity. In Mus musculus (Mouse), this protein is Dolichyl-diphosphooligosaccharide--protein glycosyltransferase subunit 1.